We begin with the raw amino-acid sequence, 227 residues long: Orotidine 5'-phosphate decarboxylase (227 aa).

Residues Asp-8, Lys-30, 58 to 67 (DLKVHDIPNT), Thr-117, Arg-177, Gln-186, Gly-206, and Arg-207 each bind substrate. Lys-60 acts as the Proton donor in catalysis.

The protein belongs to the OMP decarboxylase family. Type 1 subfamily. As to quaternary structure, homodimer.

It catalyses the reaction orotidine 5'-phosphate + H(+) = UMP + CO2. It functions in the pathway pyrimidine metabolism; UMP biosynthesis via de novo pathway; UMP from orotate: step 2/2. Functionally, catalyzes the decarboxylation of orotidine 5'-monophosphate (OMP) to uridine 5'-monophosphate (UMP). This chain is Orotidine 5'-phosphate decarboxylase, found in Campylobacter fetus subsp. fetus (strain 82-40).